Consider the following 358-residue polypeptide: Oligopeptide transport ATP-binding protein OppD (358 aa).

The 252-residue stretch at 8–259 (LEVKDLAISF…PRHPYTWGLL (252 aa)) folds into the ABC transporter domain. 44–51 (GESGSGKS) provides a ligand contact to ATP.

Belongs to the ABC transporter superfamily. As to quaternary structure, the complex is composed of two ATP-binding proteins (OppD and OppF), two transmembrane proteins (OppB and OppC) and a solute-binding protein (OppA).

Its subcellular location is the cell membrane. It catalyses the reaction a [peptide](out) + ATP + H2O = a [peptide](in) + ADP + phosphate + H(+). Functionally, part of the ABC transporter complex OppABCDF involved in the uptake of oligopeptides. Probably responsible for energy coupling to the transport system. Required for sporulation and genetic competence. This is Oligopeptide transport ATP-binding protein OppD from Bacillus subtilis (strain 168).